Reading from the N-terminus, the 329-residue chain is Aspartate--ammonia ligase (329 aa).

It belongs to the class-II aminoacyl-tRNA synthetase family. AsnA subfamily.

The protein resides in the cytoplasm. It carries out the reaction L-aspartate + NH4(+) + ATP = L-asparagine + AMP + diphosphate + H(+). The protein operates within amino-acid biosynthesis; L-asparagine biosynthesis; L-asparagine from L-aspartate (ammonia route): step 1/1. This is Aspartate--ammonia ligase from Ureaplasma parvum serovar 3 (strain ATCC 27815 / 27 / NCTC 11736).